The primary structure comprises 369 residues: Phenylalanine--tRNA ligase alpha subunit (369 aa).

Glutamate 269 is a Mg(2+) binding site.

It belongs to the class-II aminoacyl-tRNA synthetase family. Phe-tRNA synthetase alpha subunit type 1 subfamily. In terms of assembly, tetramer of two alpha and two beta subunits. Requires Mg(2+) as cofactor.

It localises to the cytoplasm. The enzyme catalyses tRNA(Phe) + L-phenylalanine + ATP = L-phenylalanyl-tRNA(Phe) + AMP + diphosphate + H(+). The sequence is that of Phenylalanine--tRNA ligase alpha subunit from Brucella abortus (strain 2308).